Here is a 232-residue protein sequence, read N- to C-terminus: Cytidylate kinase (232 aa).

19 to 27 is a binding site for ATP; that stretch reads GPAGVGKTT.

The protein belongs to the cytidylate kinase family. Type 1 subfamily.

The protein resides in the cytoplasm. It catalyses the reaction CMP + ATP = CDP + ADP. It carries out the reaction dCMP + ATP = dCDP + ADP. The polypeptide is Cytidylate kinase (Nitratidesulfovibrio vulgaris (strain ATCC 29579 / DSM 644 / CCUG 34227 / NCIMB 8303 / VKM B-1760 / Hildenborough) (Desulfovibrio vulgaris)).